A 906-amino-acid chain; its full sequence is Ankyrin repeat and MYND domain-containing protein 1 (906 aa).

MORN repeat units lie at residues 16 to 38 (YHGQFYRDHFHGLGTYTWPDGSS), 39 to 59 (FTGTFYLSQREGYGTMHTKTM), and 61 to 83 (FQGLYKEDQRFGPGIETYPDGSQ). One copy of the ANK 1 repeat lies at 282–311 (KGYTVLAAAAMHSHLDIVNLLLDFGADVNK). Over residues 391 to 400 (SMQTPESSNM) the composition is skewed to polar residues. The disordered stretch occupies residues 391–411 (SMQTPESSNMLHKEEVSPVKT). ANK repeat units lie at residues 479-508 (VRKMAQSMVERRNRWMTITLLLRRGADPNL), 511-540 (VPMQALFLAVKAGDVEGVRLLLMSGAQTDI), 547-579 (QSLTPLHIAVSLPGEEGVKITELLLHVITNVDA), 623-657 (GGRTALHVACEREDNKKCARDIVRLLLSHRANPNV), 660-689 (SGHSPLSLAIASGNDLVVKELLSQGADPNL), and 701-732 (VVCDLVYEQQRSVENKIALIDRLISYGADVLN). Zn(2+) contacts are provided by C845, C848, C859, C862, C868, C872, H881, and C885. The segment at 845-885 (CYQCGRSIGVRLSPCPRCYGILTCSKYCKTKAWIEFHKKDC) adopts an MYND-type zinc-finger fold.

This is Ankyrin repeat and MYND domain-containing protein 1 (Ankmy1) from Mus musculus (Mouse).